Consider the following 84-residue polypeptide: MARVTLRITGTQLLCQDEHPSLLAALESHNVAVEYQCREGYCGSCRTRLVAGQVDWIAEPLAFIQPGEILPCCCRAKGDIEIEM.

Positions 2-84 constitute a 2Fe-2S ferredoxin-type domain; sequence ARVTLRITGT…RAKGDIEIEM (83 aa). [2Fe-2S] cluster contacts are provided by Cys-37, Cys-42, Cys-45, and Cys-74.

It depends on [2Fe-2S] cluster as a cofactor.

This is an uncharacterized protein from Escherichia coli O6:H1 (strain CFT073 / ATCC 700928 / UPEC).